Reading from the N-terminus, the 190-residue chain is dCTP deaminase (190 aa).

A dCTP-binding site is contributed by lysine 113–arginine 118. Glutamate 139 (proton donor/acceptor) is an active-site residue. The dCTP site is built by glutamine 158, tyrosine 172, lysine 181, and glutamine 182.

It belongs to the dCTP deaminase family. Homotrimer.

It carries out the reaction dCTP + H2O + H(+) = dUTP + NH4(+). It participates in pyrimidine metabolism; dUMP biosynthesis; dUMP from dCTP (dUTP route): step 1/2. Its function is as follows. Catalyzes the deamination of dCTP to dUTP. This Chlamydia pneumoniae (Chlamydophila pneumoniae) protein is dCTP deaminase.